The primary structure comprises 380 residues: tRNA-specific 2-thiouridylase MnmA (380 aa).

ATP is bound by residues 26 to 33 (AMSGGVDS) and Leu52. Residue Cys120 is the Nucleophile of the active site. Cys120 and Cys217 are oxidised to a cystine. Residue Gly144 participates in ATP binding. The tract at residues 166–168 (RDQ) is interaction with tRNA. Cys217 functions as the Cysteine persulfide intermediate in the catalytic mechanism.

It belongs to the MnmA/TRMU family.

It is found in the cytoplasm. The enzyme catalyses S-sulfanyl-L-cysteinyl-[protein] + uridine(34) in tRNA + AH2 + ATP = 2-thiouridine(34) in tRNA + L-cysteinyl-[protein] + A + AMP + diphosphate + H(+). In terms of biological role, catalyzes the 2-thiolation of uridine at the wobble position (U34) of tRNA, leading to the formation of s(2)U34. This is tRNA-specific 2-thiouridylase MnmA from Roseobacter denitrificans (strain ATCC 33942 / OCh 114) (Erythrobacter sp. (strain OCh 114)).